Here is a 284-residue protein sequence, read N- to C-terminus: Polyamine aminopropyltransferase (284 aa).

The region spanning 2 to 237 (ELWYTEQHTE…GHWLFGFASK (236 aa)) is the PABS domain. Gln-31 is a binding site for S-methyl-5'-thioadenosine. Spermidine is bound by residues His-62 and Asp-86. S-methyl-5'-thioadenosine-binding positions include Glu-106 and 137-138 (DG). Asp-155 (proton acceptor) is an active-site residue. 155–158 (DSTD) serves as a coordination point for spermidine. Pro-162 lines the S-methyl-5'-thioadenosine pocket.

This sequence belongs to the spermidine/spermine synthase family. In terms of assembly, homodimer or homotetramer.

It localises to the cytoplasm. The enzyme catalyses S-adenosyl 3-(methylsulfanyl)propylamine + putrescine = S-methyl-5'-thioadenosine + spermidine + H(+). It functions in the pathway amine and polyamine biosynthesis; spermidine biosynthesis; spermidine from putrescine: step 1/1. Functionally, catalyzes the irreversible transfer of a propylamine group from the amino donor S-adenosylmethioninamine (decarboxy-AdoMet) to putrescine (1,4-diaminobutane) to yield spermidine. The chain is Polyamine aminopropyltransferase from Clostridium beijerinckii (strain ATCC 51743 / NCIMB 8052) (Clostridium acetobutylicum).